The following is a 321-amino-acid chain: GDP-L-fucose synthase (321 aa).

An NADP(+)-binding site is contributed by Gly14–Gly20. Residue Tyr143 is the Proton donor/acceptor of the active site. NADP(+) is bound by residues Lys147, Pro170–Val173, and His186. Positions 194, 208, 215, and 277 each coordinate substrate.

The protein belongs to the NAD(P)-dependent epimerase/dehydratase family. Fucose synthase subfamily. In terms of assembly, homodimer.

It catalyses the reaction GDP-beta-L-fucose + NADP(+) = GDP-4-dehydro-alpha-D-rhamnose + NADPH + H(+). The protein operates within nucleotide-sugar biosynthesis; GDP-L-fucose biosynthesis via de novo pathway; GDP-L-fucose from GDP-alpha-D-mannose: step 2/2. In terms of biological role, catalyzes the two-step NADP-dependent conversion of GDP-4-dehydro-6-deoxy-D-mannose to GDP-fucose, involving an epimerase and a reductase reaction. This Cricetulus griseus (Chinese hamster) protein is GDP-L-fucose synthase (GFUS).